The chain runs to 53 residues: Metallothionein (53 aa).

Belongs to the metallothionein superfamily. Type 14 family.

In terms of biological role, this protein complexes cadmium, zinc and copper. The sequence is that of Metallothionein from Synechococcus sp.